The primary structure comprises 121 residues: Splicing factor 3B subunit 6 (121 aa).

Residues 12–25 (EVNRLLYVRNLPYK) form an interaction with pre-mRNA branch site region. The 76-residue stretch at 15–90 (RLLYVRNLPY…RYLVVLYYQS (76 aa)) folds into the RRM domain.

This sequence belongs to the SF3B6 family. As to quaternary structure, component of splicing factor SF3B complex. Component of the U11/U12 snRNPs that are part of the U12-type spliceosome.

It is found in the nucleus. Its function is as follows. Involved in pre-mRNA splicing as a component of the splicing factor SF3B complex. SF3B complex is required for 'A' complex assembly formed by the stable binding of U2 snRNP to the branchpoint sequence (BPS) in pre-mRNA. Directly contacts the pre-mRNA branch site adenosine for the first catalytic step of splicing. Enters the spliceosome and associates with the pre-mRNA branch site as part of the 17S U2 or, in the case of the minor spliceosome, as part of the 18S U11/U12 snRNP complex, and thus may facilitate the interaction of these snRNP with the branch sites of U2 and U12 respectively. The chain is Splicing factor 3B subunit 6 from Drosophila melanogaster (Fruit fly).